A 397-amino-acid chain; its full sequence is F-box protein At3g49450 (397 aa).

The region spanning 26–75 (GENSGTLPTDLMVEILSRVPAKSAARFRCVSNDWNSLLRSPYLTNLFLKR) is the F-box domain.

This chain is F-box protein At3g49450, found in Arabidopsis thaliana (Mouse-ear cress).